The chain runs to 485 residues: Zinc finger protein 639 (485 aa).

Positions 1-14 (MNEYPKKRKRKTLH) are enriched in basic residues. 2 disordered regions span residues 1-23 (MNEY…DSSG) and 54-80 (DNKD…ARNR). Ser-60 is subject to Phosphoserine. Lys-76 participates in a covalent cross-link: Glycyl lysine isopeptide (Lys-Gly) (interchain with G-Cter in SUMO2). Residue Ser-88 is modified to Phosphoserine. The segment at 115–136 (ASPESVHQHTQEESPIEVHTSE) is disordered. Glycyl lysine isopeptide (Lys-Gly) (interchain with G-Cter in SUMO2) cross-links involve residues Lys-177, Lys-181, and Lys-226. 8 C2H2-type zinc fingers span residues 204 to 227 (YKCE…ILKH), 233 to 255 (NVCR…AKLH), 260 to 283 (YICK…ADTH), 289 to 311 (YWCE…FQEH), 374 to 397 (FVCQ…AIEH), 403 to 425 (HVCD…LNSH), 431 to 454 (YLCQ…DFKH), and 460 to 482 (HKCS…LQVH). An interaction with CTNNA2 region spans residues 371–455 (KNFFVCQVCG…LKIHLDFKHS (85 aa)).

The protein belongs to the krueppel C2H2-type zinc-finger protein family. Interacts with CTNNA2.

It is found in the nucleus. Functionally, binds DNA and may function as a transcriptional repressor. This Mus musculus (Mouse) protein is Zinc finger protein 639 (Znf639).